The sequence spans 521 residues: MIKQALISVSDKTGVLEFARALSGMGVNILSTGGTAKLLAENGISVTEVADYTGFPEMLDGRVKTLHPKVHGGILARRDFAEHVSALEKHNIPTIDMVVVNLYPFQQTVAREHCSLEDAIENIDIGGPAMLRSSAKNHKDVIVICDPTDYSQVLGELSANQGEVSYETKFTLAKKVFAHTAQYDGAITNYFTSLGADKQHATRSSYPATLNLHFEKVQEMRYGENPHQSAAFYRESNPQVGALANYTQLQGKELSYNNIADADAAWECVKTFDESACVIIKHANPCGVAVGASPLEAYSKALQTDPTSAFGGIIAFNRELDGNAAEAVAKQFVEVLIAPSFSEKAKQIFAGKQNVRLLEIPLGNAVNAHDFKRVGGGLLVQSPDAKNVVLAELKVVSKKQPTPQQLQDLMFAWRVAKFVKSNAIVFCANGMTMGVGAGQMSRIDSARIASIKAQNAGLSLVGTAVASDAFFPFRDGLDVVVAAGATSVIHPGGSMRDQEVIDAADEQGVVMLMTGTRHFRH.

In terms of domain architecture, MGS-like spans 1 to 145 (MIKQALISVS…KNHKDVIVIC (145 aa)).

It belongs to the PurH family.

The enzyme catalyses (6R)-10-formyltetrahydrofolate + 5-amino-1-(5-phospho-beta-D-ribosyl)imidazole-4-carboxamide = 5-formamido-1-(5-phospho-D-ribosyl)imidazole-4-carboxamide + (6S)-5,6,7,8-tetrahydrofolate. It carries out the reaction IMP + H2O = 5-formamido-1-(5-phospho-D-ribosyl)imidazole-4-carboxamide. It participates in purine metabolism; IMP biosynthesis via de novo pathway; 5-formamido-1-(5-phospho-D-ribosyl)imidazole-4-carboxamide from 5-amino-1-(5-phospho-D-ribosyl)imidazole-4-carboxamide (10-formyl THF route): step 1/1. It functions in the pathway purine metabolism; IMP biosynthesis via de novo pathway; IMP from 5-formamido-1-(5-phospho-D-ribosyl)imidazole-4-carboxamide: step 1/1. The protein is Bifunctional purine biosynthesis protein PurH of Janthinobacterium sp. (strain Marseille) (Minibacterium massiliensis).